The sequence spans 372 residues: Saccharopine dehydrogenase [NAD(+), L-lysine-forming] (372 aa).

L-saccharopine is bound by residues Arg18 and Lys77. Lys77 (proton acceptor) is an active-site residue. His95 (proton donor) is an active-site residue. Gln100 contributes to the L-saccharopine binding site. Arg129 is an NAD(+) binding site. The L-saccharopine site is built by Arg130 and Phe134. Residues Gly200–Arg201, Asp224, Thr228, Tyr248, and Val275 each bind NAD(+). Cys202 and Cys246 are oxidised to a cystine. Ser276–Asp278 is a binding site for L-saccharopine. NAD(+) is bound at residue Ile316 to Leu319.

It belongs to the AlaDH/PNT family. Monomer.

The catalysed reaction is L-saccharopine + NAD(+) + H2O = L-lysine + 2-oxoglutarate + NADH + H(+). It functions in the pathway amino-acid biosynthesis; L-lysine biosynthesis via AAA pathway; L-lysine from L-alpha-aminoadipate (fungal route): step 3/3. Functionally, catalyzes the NAD(+)-dependent cleavage of saccharopine to L-lysine and 2-oxoglutarate, the final step in the alpha-aminoadipate (AAA) pathway for lysin biosynthesis. This Neurospora crassa (strain ATCC 24698 / 74-OR23-1A / CBS 708.71 / DSM 1257 / FGSC 987) protein is Saccharopine dehydrogenase [NAD(+), L-lysine-forming] (lys-4).